The following is a 297-amino-acid chain: Probable endonuclease 4 (297 aa).

Residues H69, H110, E145, D179, H182, H214, D227, H229, and E259 each coordinate Zn(2+).

The protein belongs to the AP endonuclease 2 family. It depends on Zn(2+) as a cofactor.

The catalysed reaction is Endonucleolytic cleavage to 5'-phosphooligonucleotide end-products.. In terms of biological role, endonuclease IV plays a role in DNA repair. It cleaves phosphodiester bonds at apurinic or apyrimidinic (AP) sites, generating a 3'-hydroxyl group and a 5'-terminal sugar phosphate. The polypeptide is Probable endonuclease 4 (Listeria monocytogenes serotype 4b (strain F2365)).